We begin with the raw amino-acid sequence, 67 residues long: UPF0253 protein VS_2370 (67 aa).

Belongs to the UPF0253 family.

In Vibrio atlanticus (strain LGP32) (Vibrio splendidus (strain Mel32)), this protein is UPF0253 protein VS_2370.